The primary structure comprises 152 residues: Maintenance of carboxysome distribution protein B (152 aa).

Self-associates, interacts with McdA probably via the C-terminus of both proteins. Homohexamerizes. Probably a trimer of dimers. Interacts with most of the shell components of the carboxysome (CcmK2, CcmK3, CcmK4, CcmL and CcmO, but not CcmP) via its C-terminus.

The protein resides in the carboxysome. Functionally, mcdA and McdB together mediate carboxysome (Cb) spacing, size, ultrastructure and probably inheritance in the cell. Together they prevent Cb aggregation. McdA is an ATPase that forms dynamic gradients on the nucleoid in response to adapter protein McdB, which associates with carboxysomes. The interplay between McdA gradients on the nucleoid and McdB-bound carboxysomes result in the equal spacing of Cbs along the cell length. McdB may have an additional function in cell divison. Stimulates the ATPase activity of McdA, causing McdA to be released from DNA. Overexpression leads to loss of McdA oscillation and formation of large Cb aggregates which colocalize with McdB, as well as diffuse McdB staining in the cytoplasm. Undergoes liquid-liquid phase separation between pH 6.5-7.5 and at concentrations between 1 uM and 167 uM. Forms polar foci upon overexpression in E.coli. Incorrect positioning (aggregation) of carboxysomes results in reduced CO(2) fixation by encapsulated RuBisCO, which leads to slower growth, cell elongation, asymmetric cell division and an increase in RuBisCO levels. The chain is Maintenance of carboxysome distribution protein B from Synechococcus elongatus (strain ATCC 33912 / PCC 7942 / FACHB-805) (Anacystis nidulans R2).